The sequence spans 93 residues: MKFAVILLFSLVVLAVASESVEEVRREIDIEDLPEQQRGCADLRQPCTEGDDCSCCGREGVCNCSHPHKKGCYCKTAGPLEKLAKKFKGCKNK.

The N-terminal stretch at 1-18 (MKFAVILLFSLVVLAVAS) is a signal peptide. A propeptide spanning residues 19–38 (ESVEEVRREIDIEDLPEQQR) is cleaved from the precursor.

The protein belongs to the neurotoxin 31 family. In terms of processing, contains 5 disulfide bonds. As to expression, expressed by the venom gland.

It is found in the secreted. This is U12-lycotoxin-Ls1c from Lycosa singoriensis (Wolf spider).